A 253-amino-acid polypeptide reads, in one-letter code: Pimeloyl-[acyl-carrier protein] methyl ester esterase (253 aa).

Substrate is bound by residues Trp18, 78 to 79 (SL), and 139 to 143 (FLALD). The active-site Nucleophile is the Ser78. Residues Asp203 and His231 contribute to the active site. His231 lines the substrate pocket.

The protein belongs to the AB hydrolase superfamily. Carboxylesterase BioH family. As to quaternary structure, monomer.

It localises to the cytoplasm. The catalysed reaction is 6-carboxyhexanoyl-[ACP] methyl ester + H2O = 6-carboxyhexanoyl-[ACP] + methanol + H(+). The protein operates within cofactor biosynthesis; biotin biosynthesis. The physiological role of BioH is to remove the methyl group introduced by BioC when the pimeloyl moiety is complete. It allows to synthesize pimeloyl-ACP via the fatty acid synthetic pathway through the hydrolysis of the ester bonds of pimeloyl-ACP esters. The sequence is that of Pimeloyl-[acyl-carrier protein] methyl ester esterase from Xanthomonas campestris pv. campestris (strain 8004).